A 495-amino-acid chain; its full sequence is ATP synthase subunit beta, chloroplastic (495 aa).

Gly172–Thr179 serves as a coordination point for ATP.

This sequence belongs to the ATPase alpha/beta chains family. F-type ATPases have 2 components, CF(1) - the catalytic core - and CF(0) - the membrane proton channel. CF(1) has five subunits: alpha(3), beta(3), gamma(1), delta(1), epsilon(1). CF(0) has four main subunits: a(1), b(1), b'(1) and c(9-12).

The protein localises to the plastid. It is found in the chloroplast thylakoid membrane. The catalysed reaction is ATP + H2O + 4 H(+)(in) = ADP + phosphate + 5 H(+)(out). Produces ATP from ADP in the presence of a proton gradient across the membrane. The catalytic sites are hosted primarily by the beta subunits. In Eucomis bicolor (King's flower), this protein is ATP synthase subunit beta, chloroplastic.